An 88-amino-acid chain; its full sequence is Small ribosomal subunit protein eS21 (88 aa).

This sequence belongs to the eukaryotic ribosomal protein eS21 family. As to quaternary structure, component of the 40S small ribosomal subunit.

The protein localises to the cytoplasm. It is found in the cytosol. It localises to the rough endoplasmic reticulum. The polypeptide is Small ribosomal subunit protein eS21 (rps-21) (Caenorhabditis elegans).